The following is a 674-amino-acid chain: CRS2-associated factor 1, chloroplastic (674 aa).

A chloroplast-targeting transit peptide spans Met1–Ser54. The interval Ser31–Ala61 is disordered. Positions Thr48–Ala57 are enriched in low complexity. 2 consecutive CRM domains span residues Glu183–Cys279 and Gly301–Leu397. The segment at Gly554–Leu576 is CRS2 binding.

Interacts with CRS2 and RNA. Part of large ribonucleo-protein complexes that include group IIB introns, CRS2 and CAF1.

It localises to the plastid. It is found in the chloroplast stroma. Functionally, required for the splicing of group IIB introns in chloroplasts. Forms splicing particles with CRS2. Interacts with RNA and confers intron specificity of the splicing particles. This is CRS2-associated factor 1, chloroplastic (CAF1) from Zea mays (Maize).